The following is a 428-amino-acid chain: Pyruvate kinase (428 aa).

Arg-34 provides a ligand contact to substrate. The K(+) site is built by Asn-36, Ser-38, Asp-68, and Thr-69. Residue Asn-36–His-39 participates in ATP binding. ATP contacts are provided by Arg-75 and Lys-152. Glu-214 is a binding site for Mg(2+). 3 residues coordinate substrate: Gly-237, Asp-238, and Thr-270. Asp-238 serves as a coordination point for Mg(2+).

It belongs to the pyruvate kinase family. In terms of assembly, homotetramer. The cofactor is Mg(2+). Requires K(+) as cofactor.

It carries out the reaction pyruvate + ATP = phosphoenolpyruvate + ADP + H(+). Its pathway is carbohydrate degradation; glycolysis; pyruvate from D-glyceraldehyde 3-phosphate: step 5/5. In Encephalitozoon cuniculi (strain GB-M1) (Microsporidian parasite), this protein is Pyruvate kinase (PYK1).